The primary structure comprises 339 residues: UDP-3-O-acylglucosamine N-acyltransferase (339 aa).

The Proton acceptor role is filled by His248.

This sequence belongs to the transferase hexapeptide repeat family. LpxD subfamily. Homotrimer.

The enzyme catalyses a UDP-3-O-[(3R)-3-hydroxyacyl]-alpha-D-glucosamine + a (3R)-hydroxyacyl-[ACP] = a UDP-2-N,3-O-bis[(3R)-3-hydroxyacyl]-alpha-D-glucosamine + holo-[ACP] + H(+). It participates in bacterial outer membrane biogenesis; LPS lipid A biosynthesis. In terms of biological role, catalyzes the N-acylation of UDP-3-O-acylglucosamine using 3-hydroxyacyl-ACP as the acyl donor. Is involved in the biosynthesis of lipid A, a phosphorylated glycolipid that anchors the lipopolysaccharide to the outer membrane of the cell. This Caulobacter vibrioides (strain NA1000 / CB15N) (Caulobacter crescentus) protein is UDP-3-O-acylglucosamine N-acyltransferase.